A 285-amino-acid polypeptide reads, in one-letter code: Cytochrome c1 (285 aa).

The signal sequence occupies residues 1–22 (MIRKLTLTAATALALSGGAAMA). Residues Cys-58, Cys-61, His-62, and Met-207 each coordinate heme c. A helical transmembrane segment spans residues 251–269 (AGFTAVMFLTVLSVLLYLT).

As to quaternary structure, the main subunits of complex b-c1 are: cytochrome b, cytochrome c1 and the Rieske protein. Binds 1 heme c group covalently per subunit.

It localises to the cell membrane. In terms of biological role, component of the ubiquinol-cytochrome c reductase complex (complex III or cytochrome b-c1 complex), which is a respiratory chain that generates an electrochemical potential coupled to ATP synthesis. c1 functions as an electron donor to cytochrome c. In Cereibacter sphaeroides (Rhodobacter sphaeroides), this protein is Cytochrome c1 (petC).